The chain runs to 494 residues: Casein kinase I homolog HRR25 (494 aa).

Residues 9-278 (FRIGRKIGSG…LARLFKDLSI (270 aa)) enclose the Protein kinase domain. ATP contacts are provided by residues 15–23 (IGSGSFGDI) and lysine 38. Aspartate 128 acts as the Proton acceptor in catalysis. Serine 143 carries the phosphoserine modification. The interval 394–494 (RQQQPQQQVQ…DKPAGQSIWL (101 aa)) is disordered. Composition is skewed to low complexity over residues 395-418 (QQQP…QQQP) and 432-444 (QQQQ…QQQQ). Residues 445-479 (VPMATTRATQYPPQINSNNFNTNQASVPPQMRSNP) are compositionally biased toward polar residues.

Belongs to the protein kinase superfamily. CK1 Ser/Thr protein kinase family. Casein kinase I subfamily. Interacts with HRI1. Interacts with ELP1/IKI3; the interaction leads to ELP1/IKI3 phosphorylation.

The protein localises to the cytoplasm. It localises to the nucleus. It is found in the nucleolus. Its subcellular location is the nucleoplasm. It carries out the reaction L-seryl-[protein] + ATP = O-phospho-L-seryl-[protein] + ADP + H(+). It catalyses the reaction L-threonyl-[protein] + ATP = O-phospho-L-threonyl-[protein] + ADP + H(+). Functionally, protein kinase which phosphorylates serine and threonine residues. Can use casein as a substrate. Phosphorylates elongator complex member ELP1/IKI3 on 'Ser-1198' and 'Ser-1202' which promotes the tRNA modification function of the complex. Associated with repair of damaged DNA and meiosis. In Saccharomyces cerevisiae (strain ATCC 204508 / S288c) (Baker's yeast), this protein is Casein kinase I homolog HRR25 (HRR25).